Reading from the N-terminus, the 406-residue chain is Haptoglobin (406 aa).

The signal sequence occupies residues 1 to 18 (MSALGAVIALLLWGQLFA). 2 consecutive Sushi domains span residues 31–88 (DGCP…ECEA) and 90–147 (DGCP…ECEA). 5 disulfide bridges follow: C52-C86, C111-C145, C149-C266, C309-C340, and C351-C381. A Peptidase S1 domain is found at 162–404 (ILGGHLDAKG…IQDWVQKTIA (243 aa)). N-linked (GlcNAc...) (complex) asparagine glycosylation is present at N184. Residues N207 and N211 are each glycosylated (N-linked (GlcNAc...) asparagine). N241 carries N-linked (GlcNAc...) (complex) asparagine glycosylation. The segment at 318–323 (VPEKKT) is interaction with CD163.

The protein belongs to the peptidase S1 family. Tetramer of two alpha and two beta chains; disulfide-linked. The hemoglobin/haptoglobin complex is composed of a haptoglobin dimer bound to two hemoglobin alpha-beta dimers. Interacts with CD163. Interacts with ERGIC3. Expressed by the liver and secreted in plasma.

Its subcellular location is the secreted. Functionally, as a result of hemolysis, hemoglobin is found to accumulate in the kidney and is secreted in the urine. Haptoglobin captures, and combines with free plasma hemoglobin to allow hepatic recycling of heme iron and to prevent kidney damage. Haptoglobin also acts as an antioxidant, has antibacterial activity, and plays a role in modulating many aspects of the acute phase response. Hemoglobin/haptoglobin complexes are rapidly cleared by the macrophage CD163 scavenger receptor expressed on the surface of liver Kupfer cells through an endocytic lysosomal degradation pathway. The uncleaved form of allele alpha-2 (2-2), known as zonulin, plays a role in intestinal permeability, allowing intercellular tight junction disassembly, and controlling the equilibrium between tolerance and immunity to non-self antigens. This Homo sapiens (Human) protein is Haptoglobin (HP).